We begin with the raw amino-acid sequence, 236 residues long: tRNA1(Val) (adenine(37)-N6)-methyltransferase (236 aa).

Belongs to the methyltransferase superfamily. tRNA (adenine-N(6)-)-methyltransferase family.

Its subcellular location is the cytoplasm. The enzyme catalyses adenosine(37) in tRNA1(Val) + S-adenosyl-L-methionine = N(6)-methyladenosine(37) in tRNA1(Val) + S-adenosyl-L-homocysteine + H(+). Specifically methylates the adenine in position 37 of tRNA(1)(Val) (anticodon cmo5UAC). In Shewanella sp. (strain MR-4), this protein is tRNA1(Val) (adenine(37)-N6)-methyltransferase.